Reading from the N-terminus, the 176-residue chain is Ribosome maturation factor RimM (176 aa).

A PRC barrel domain is found at 93-166; sequence EGEYYHADLI…RVVIEMPGEI (74 aa).

The protein belongs to the RimM family. Binds ribosomal protein uS19.

It is found in the cytoplasm. In terms of biological role, an accessory protein needed during the final step in the assembly of 30S ribosomal subunit, possibly for assembly of the head region. Essential for efficient processing of 16S rRNA. May be needed both before and after RbfA during the maturation of 16S rRNA. It has affinity for free ribosomal 30S subunits but not for 70S ribosomes. This is Ribosome maturation factor RimM from Rhodopseudomonas palustris (strain BisA53).